A 436-amino-acid chain; its full sequence is Retinoic acid receptor RXR (436 aa).

A disordered region spans residues 1 to 108; the sequence is MDRSEGMDTL…GPSPSPGLPH (108 aa). The segment at 1–116 is modulating; the sequence is MDRSEGMDTL…PHSSLHTKHI (116 aa). Residues 13 to 22 are compositionally biased toward low complexity; that stretch reads SMPSGMSMGM. 2 stretches are compositionally biased toward polar residues: residues 40-49 and 62-76; these read SSLTSPTSTH and MASSTQPSPGPQQMH. Positions 85-98 are enriched in low complexity; it reads SSMGSPPMLCLSPS. 2 NR C4-type zinc fingers span residues 117–137 and 153–172; these read CAICGDRASGKHYGVYSCEGC and CRDDKNCMIDKRQRNRCQYC. Positions 117–182 form a DNA-binding region, nuclear receptor; the sequence is CAICGDRASG…RYMKCLSMGM (66 aa). A hinge region spans residues 183–206; it reads KREAVQEERQRVKEKGDGEVESTS. The span at 189–200 shows a compositional bias: basic and acidic residues; it reads EERQRVKEKGDG. The segment at 189-209 is disordered; sequence EERQRVKEKGDGEVESTSGAN. The region spanning 209–432 is the NR LBD domain; the sequence is NNDMPVEQIL…TFLMEMLENP (224 aa). 2 residues coordinate 9-cis-retinoate: R290 and A301.

The protein belongs to the nuclear hormone receptor family. NR2 subfamily. In terms of assembly, homodimer (via ligand-binding domain). Heterodimer. Homotetramer consisting of 2 canonical homodimers. Within the tetramer, each monomer binds one molecule of 9C-RA and a NCOA1-derived peptide containing an L-X(2)-L-L motif.

The protein resides in the nucleus. Functionally, ligand-dependent transcription factor probably involved in the retinoic acid response pathway. Binds 9-cis-retinoic acid (9C-RA) and, to a lesser extent, docosahexaenoic acid (DHA), phytanic acid, methoprene acid and oleic acid. Binds to double-stranded DNA sequences containing direct repeats (DR) with the consensus sequence 5'-[AG]GGTCA-3' and 1, 2, 3, 4 or 5 nucleotides in between (DR1, DR2, DR3. DR4 and DR5, respectively). Binding to DR1 is strongest. Transactivates gene expression when 9C-RA or DHA is bound. This Biomphalaria glabrata (Bloodfluke planorb) protein is Retinoic acid receptor RXR.